A 343-amino-acid chain; its full sequence is GTPase Obg (343 aa).

Residues 1–159 (MKFLDEAKVY…HWLWLRLKLI (159 aa)) enclose the Obg domain. One can recognise an OBG-type G domain in the interval 160–327 (ADAGLVGLPN…ALRALLAAMD (168 aa)). GTP-binding positions include 166–173 (GLPNAGKS), 191–195 (FTTLH), 212–215 (DIPG), 279–282 (SKAD), and 308–310 (SAA). Positions 173 and 193 each coordinate Mg(2+).

It belongs to the TRAFAC class OBG-HflX-like GTPase superfamily. OBG GTPase family. In terms of assembly, monomer. Requires Mg(2+) as cofactor.

The protein localises to the cytoplasm. Functionally, an essential GTPase which binds GTP, GDP and possibly (p)ppGpp with moderate affinity, with high nucleotide exchange rates and a fairly low GTP hydrolysis rate. Plays a role in control of the cell cycle, stress response, ribosome biogenesis and in those bacteria that undergo differentiation, in morphogenesis control. This chain is GTPase Obg, found in Methylobacterium sp. (strain 4-46).